We begin with the raw amino-acid sequence, 160 residues long: Protein-export protein SecB (160 aa).

Belongs to the SecB family. In terms of assembly, homotetramer, a dimer of dimers. One homotetramer interacts with 1 SecA dimer.

The protein resides in the cytoplasm. In terms of biological role, one of the proteins required for the normal export of preproteins out of the cell cytoplasm. It is a molecular chaperone that binds to a subset of precursor proteins, maintaining them in a translocation-competent state. It also specifically binds to its receptor SecA. The chain is Protein-export protein SecB from Orientia tsutsugamushi (strain Boryong) (Rickettsia tsutsugamushi).